Consider the following 333-residue polypeptide: 2-oxoglutarate-dependent dioxygenase 21, chloroplastic (333 aa).

The N-terminal 43 residues, 1–43, are a transit peptide targeting the chloroplast; it reads MPAVAGSLYMASQHKGVPPPLPPPPRPLPVINLGRLTMDSASR. The Fe2OG dioxygenase domain occupies 180 to 281; sequence GVQFVALNNY…RISIASIHGL (102 aa). 3 residues coordinate Fe cation: histidine 205, aspartate 207, and histidine 262. Arginine 272 provides a ligand contact to 2-oxoglutarate.

Belongs to the iron/ascorbate-dependent oxidoreductase family. Requires Fe(2+) as cofactor. L-ascorbate is required as a cofactor. Expressed in roots.

Its subcellular location is the plastid. It localises to the chloroplast. The catalysed reaction is melatonin + 2-oxoglutarate + O2 = 2-hydroxymelatonin + succinate + CO2. Functionally, involved in melatonin degradation. Catalyzes the hydroxylation of melatonin to produce 2-hydroxymelatonin. The polypeptide is 2-oxoglutarate-dependent dioxygenase 21, chloroplastic (Oryza sativa subsp. japonica (Rice)).